The following is a 1146-amino-acid chain: Transcription-repair-coupling factor (1146 aa).

Positions 617–778 (DMCQPKAMDR…MNGIRDLSII (162 aa)) constitute a Helicase ATP-binding domain. 630 to 637 (GDVGFGKT) is a binding site for ATP. The DEEH box motif lies at 731–734 (DEEH). Positions 800 to 953 (VREAILREIL…GFILATHDLE (154 aa)) constitute a Helicase C-terminal domain.

The protein in the N-terminal section; belongs to the UvrB family. In the C-terminal section; belongs to the helicase family. RecG subfamily.

It is found in the cytoplasm. In terms of biological role, couples transcription and DNA repair by recognizing RNA polymerase (RNAP) stalled at DNA lesions. Mediates ATP-dependent release of RNAP and its truncated transcript from the DNA, and recruitment of nucleotide excision repair machinery to the damaged site. The sequence is that of Transcription-repair-coupling factor from Haemophilus influenzae (strain ATCC 51907 / DSM 11121 / KW20 / Rd).